Reading from the N-terminus, the 128-residue chain is Ribonuclease pancreatic (128 aa).

The segment at alanine 1–alanine 23 is disordered. Substrate contacts are provided by lysine 7 and arginine 10. Histidine 12 acts as the Proton acceptor in catalysis. Cystine bridges form between cysteine 26–cysteine 84, cysteine 40–cysteine 95, cysteine 58–cysteine 110, and cysteine 65–cysteine 72. Substrate contacts are provided by residues lysine 41 to threonine 45, lysine 66, and arginine 85. Histidine 119 acts as the Proton donor in catalysis.

It belongs to the pancreatic ribonuclease family. In terms of assembly, monomer. Interacts with and forms tight 1:1 complexes with RNH1. Dimerization of two such complexes may occur. Interaction with RNH1 inhibits this protein. In terms of tissue distribution, pancreas.

The protein localises to the secreted. It carries out the reaction an [RNA] containing cytidine + H2O = an [RNA]-3'-cytidine-3'-phosphate + a 5'-hydroxy-ribonucleotide-3'-[RNA].. The enzyme catalyses an [RNA] containing uridine + H2O = an [RNA]-3'-uridine-3'-phosphate + a 5'-hydroxy-ribonucleotide-3'-[RNA].. Its function is as follows. Endonuclease that catalyzes the cleavage of RNA on the 3' side of pyrimidine nucleotides. Acts on single-stranded and double-stranded RNA. The chain is Ribonuclease pancreatic (RNASE1) from Hydrochoerus hydrochaeris (Capybara).